The sequence spans 381 residues: Protein COS8 (381 aa).

At 1-42 (MKENEVKDEKSVDVLSFKQLEFQKTVLPQDVFRNELTWFCYE) the chain is on the extracellular side. The helical transmembrane segment at 43-63 (IYKSLAFRIWMLLWLPLSVWW) threads the bilayer. The Cytoplasmic portion of the chain corresponds to 64–72 (KLSSNWIHP). Residues 73–93 (LIVSLLVLFLGPFFVLVICGL) form a helical membrane-spanning segment. Residues 94 to 237 (SRKRSLSKQL…WILKRIFNLR (144 aa)) are Extracellular-facing. A helical membrane pass occupies residues 238–258 (CLPLFLYYFLIVYTSGNADLI). Residues 259-381 (SRFLFPVVMF…QSARNEKPLK (123 aa)) are Cytoplasmic-facing.

It belongs to the DUP/COS family.

It localises to the membrane. In Saccharomyces cerevisiae (strain ATCC 204508 / S288c) (Baker's yeast), this protein is Protein COS8 (COS8).